The following is a 150-amino-acid chain: Histone H2B.2 (150 aa).

Over residues 1-16 (MAPKAEKKPAAKKPAE) the composition is skewed to basic and acidic residues. Residues 1–57 (MAPKAEKKPAAKKPAEEEPAAEKAPAGKKPKAEKRVPAGKSAGKEGGEGKRGRKKGK) are disordered. Residues K7 and K34 each carry the N6-acetyllysine modification. Residue K146 forms a Glycyl lysine isopeptide (Lys-Gly) (interchain with G-Cter in ubiquitin) linkage.

The protein belongs to the histone H2B family. As to quaternary structure, the nucleosome is a histone octamer containing two molecules each of H2A, H2B, H3 and H4 assembled in one H3-H4 heterotetramer and two H2A-H2B heterodimers. The octamer wraps approximately 147 bp of DNA. Can be acetylated to form H2BK6ac and H2BK33ac. Post-translationally, monoubiquitinated to form H2BK143ub1; may give a specific tag for epigenetic transcriptional activation.

It localises to the nucleus. The protein localises to the chromosome. In terms of biological role, core component of nucleosome. Nucleosomes wrap and compact DNA into chromatin, limiting DNA accessibility to the cellular machineries which require DNA as a template. Histones thereby play a central role in transcription regulation, DNA repair, DNA replication and chromosomal stability. DNA accessibility is regulated via a complex set of post-translational modifications of histones, also called histone code, and nucleosome remodeling. The sequence is that of Histone H2B.2 from Zea mays (Maize).